The following is a 226-amino-acid chain: Large ribosomal subunit protein uL1 (226 aa).

It belongs to the universal ribosomal protein uL1 family. As to quaternary structure, part of the 50S ribosomal subunit.

In terms of biological role, binds directly to 23S rRNA. The L1 stalk is quite mobile in the ribosome, and is involved in E site tRNA release. Functionally, protein L1 is also a translational repressor protein, it controls the translation of the L11 operon by binding to its mRNA. The sequence is that of Large ribosomal subunit protein uL1 from Borrelia garinii subsp. bavariensis (strain ATCC BAA-2496 / DSM 23469 / PBi) (Borreliella bavariensis).